A 365-amino-acid polypeptide reads, in one-letter code: Fructose-1,6-bisphosphatase class 1 2 (365 aa).

Residues glutamate 100, aspartate 122, leucine 124, and aspartate 125 each contribute to the Mg(2+) site. Substrate-binding positions include 125 to 128 and asparagine 221; that span reads DGSS. Glutamate 293 provides a ligand contact to Mg(2+).

This sequence belongs to the FBPase class 1 family. As to quaternary structure, homotetramer. Mg(2+) is required as a cofactor.

The protein localises to the cytoplasm. The catalysed reaction is beta-D-fructose 1,6-bisphosphate + H2O = beta-D-fructose 6-phosphate + phosphate. It participates in carbohydrate biosynthesis; gluconeogenesis. The chain is Fructose-1,6-bisphosphatase class 1 2 from Cupriavidus metallidurans (strain ATCC 43123 / DSM 2839 / NBRC 102507 / CH34) (Ralstonia metallidurans).